The chain runs to 387 residues: 3-ketoacyl-CoA thiolase (387 aa).

Cysteine 91 acts as the Acyl-thioester intermediate in catalysis. Active-site proton acceptor residues include histidine 343 and cysteine 373.

This sequence belongs to the thiolase-like superfamily. Thiolase family. As to quaternary structure, heterotetramer of two alpha chains (FadB) and two beta chains (FadA).

The protein localises to the cytoplasm. It carries out the reaction an acyl-CoA + acetyl-CoA = a 3-oxoacyl-CoA + CoA. It participates in lipid metabolism; fatty acid beta-oxidation. Catalyzes the final step of fatty acid oxidation in which acetyl-CoA is released and the CoA ester of a fatty acid two carbons shorter is formed. The chain is 3-ketoacyl-CoA thiolase from Escherichia coli (strain UTI89 / UPEC).